A 173-amino-acid polypeptide reads, in one-letter code: Crossover junction endodeoxyribonuclease RuvC (173 aa).

Residues aspartate 8, glutamate 67, and aspartate 139 contribute to the active site. The Mg(2+) site is built by aspartate 8, glutamate 67, and aspartate 139.

This sequence belongs to the RuvC family. Homodimer which binds Holliday junction (HJ) DNA. The HJ becomes 2-fold symmetrical on binding to RuvC with unstacked arms; it has a different conformation from HJ DNA in complex with RuvA. In the full resolvosome a probable DNA-RuvA(4)-RuvB(12)-RuvC(2) complex forms which resolves the HJ. It depends on Mg(2+) as a cofactor.

The protein resides in the cytoplasm. It catalyses the reaction Endonucleolytic cleavage at a junction such as a reciprocal single-stranded crossover between two homologous DNA duplexes (Holliday junction).. Its function is as follows. The RuvA-RuvB-RuvC complex processes Holliday junction (HJ) DNA during genetic recombination and DNA repair. Endonuclease that resolves HJ intermediates. Cleaves cruciform DNA by making single-stranded nicks across the HJ at symmetrical positions within the homologous arms, yielding a 5'-phosphate and a 3'-hydroxyl group; requires a central core of homology in the junction. The consensus cleavage sequence is 5'-(A/T)TT(C/G)-3'. Cleavage occurs on the 3'-side of the TT dinucleotide at the point of strand exchange. HJ branch migration catalyzed by RuvA-RuvB allows RuvC to scan DNA until it finds its consensus sequence, where it cleaves and resolves the cruciform DNA. The protein is Crossover junction endodeoxyribonuclease RuvC of Salmonella paratyphi C (strain RKS4594).